The chain runs to 192 residues: uncharacterized protein (192 aa).

Residues 1–17 (MFKKILFPLVALFMLAG) form the signal peptide. The N-palmitoyl cysteine moiety is linked to residue Cys-18. Cys-18 is lipidated: S-diacylglycerol cysteine.

This sequence to H.influenzae HI_0162.

Its subcellular location is the cell membrane. This is an uncharacterized protein from Escherichia coli O6:H1 (strain CFT073 / ATCC 700928 / UPEC).